We begin with the raw amino-acid sequence, 301 residues long: Small ribosomal subunit protein uS2 (301 aa).

Belongs to the universal ribosomal protein uS2 family. As to quaternary structure, component of the small ribosomal subunit. Mature ribosomes consist of a small (40S) and a large (60S) subunit. The 40S subunit contains about 33 different proteins and 1 molecule of RNA (18S). The 60S subunit contains about 49 different proteins and 3 molecules of RNA (28S, 5.8S and 5S). Interacts with ribosomal protein S21.

Its subcellular location is the cytoplasm. Functionally, required for the assembly and/or stability of the 40S ribosomal subunit. Required for the processing of the 20S rRNA-precursor to mature 18S rRNA in a late step of the maturation of 40S ribosomal subunits. In Brugia malayi (Filarial nematode worm), this protein is Small ribosomal subunit protein uS2.